Here is a 673-residue protein sequence, read N- to C-terminus: Sodium/myo-inositol cotransporter 2 (673 aa).

Topologically, residues 1 to 27 (MESTTSSPQPPPSDALEAFPQKSMEPA) are extracellular. Residues 28 to 48 (DIVVLVLYFLFVLAVGLWSTV) form a helical membrane-spanning segment. The Cytoplasmic portion of the chain corresponds to 49–56 (RTKRDTVK). A helical membrane pass occupies residues 57–77 (GYFLAGGDMVWWPVGASLFAS). Asparagine 78 is a topological domain (extracellular). A helical transmembrane segment spans residues 79–99 (VGSGHFIGLAGSGAAVGISVA). Residues 100–102 (AYE) lie on the Cytoplasmic side of the membrane. Residues 103-123 (LNGLFSVLMLAWIFLPIYIAG) form a helical membrane-spanning segment. The Extracellular segment spans residues 124–180 (QVTTMPEYLKRRFGGSRIPITLASIYPSTHSLTILQVDMYAGAIFIQQSLHLDLYLA). The chain crosses the membrane as a helical span at residues 181–201 (IVGLLAVTALYTVAGGLAAVI). Topologically, residues 202-208 (YTDALQT) are cytoplasmic. Residues 209–229 (VIMLIGAFILMGYSFAAVGGM) form a helical membrane-spanning segment. The Extracellular segment spans residues 230-272 (EGLKDQYFLALASNRSENSSCGLPREDAFHIFRDPLTSDLPWP). The chain crosses the membrane as a helical span at residues 273 to 293 (GILFGMSIPSLWYWCTDQVIV). Over 294–308 (QRSLAAKNLSHAKGG) the chain is Cytoplasmic. A helical membrane pass occupies residues 309 to 329 (SLMAAYLKVLPLFLMVFPGMV). Topologically, residues 330–375 (SRILFPDQVACAHPDICQRVCSNPSGCSDIAYPKLVLELLPTGLRG) are extracellular. Residues 376 to 396 (LMMAVMVAALMSSLTSIFNSA) traverse the membrane as a helical segment. Topologically, residues 397-418 (STIFTMDLWHHIRPRASERELM) are cytoplasmic. The chain crosses the membrane as a helical span at residues 419 to 439 (IVGRVFVLALVLVSILWIPVV). Over 440–446 (QASQGGQ) the chain is Extracellular. A helical membrane pass occupies residues 447-467 (LFIYIQSISSYLQPPVAVVFI). Residues 468 to 479 (MGCFWKRTNEKG) lie on the Cytoplasmic side of the membrane. A helical transmembrane segment spans residues 480–500 (AFSGLILGLLLGLVRLILDFV). The Extracellular portion of the chain corresponds to 501 to 521 (YVQPRCDQPDDRPAVVKDVHY). Residues 522-542 (LYFSMILSSTTLITVFTVSWF) form a helical membrane-spanning segment. Over 543-652 (TETPSKEMVS…SLEENPLVKT (110 aa)) the chain is Cytoplasmic. Residues 653–673 (LLDVNCIVCISCAIFLWGYFA) form a helical membrane-spanning segment.

It belongs to the sodium:solute symporter (SSF) (TC 2.A.21) family. As to expression, expressed in kidney and small intestine.

It is found in the membrane. It localises to the apical cell membrane. It carries out the reaction myo-inositol(out) + 2 Na(+)(out) = myo-inositol(in) + 2 Na(+)(in). The catalysed reaction is 1D-chiro-inositol(out) + 2 Na(+)(out) = 1D-chiro-inositol(in) + 2 Na(+)(in). The enzyme catalyses D-glucose(out) + 2 Na(+)(out) = D-glucose(in) + 2 Na(+)(in). It catalyses the reaction D-xylose(out) + 2 Na(+)(out) = D-xylose(in) + 2 Na(+)(in). Its activity is regulated as follows. MI transport activity inhibited by D-chiro-inositol (DCI), phlorizin (Pz) and sodium (Na(+)). Insulin increases D-chiro-inositol uptake. Functionally, involved in the sodium-dependent cotransport of myo-inositol (MI) with a Na(+):MI stoichiometry of 2:1. Exclusively responsible for apical MI transport and absorption in intestine. Can also transport D-chiro-inositol (DCI) but not L-fucose. Exhibits stereospecific cotransport of both D-glucose and D-xylose. May induce apoptosis through the TNF-alpha, PDCD1 pathway. May play a role in the regulation of MI concentration in serum, involving reabsorption in at least the proximal tubule of the kidney. This is Sodium/myo-inositol cotransporter 2 from Rattus norvegicus (Rat).